Here is a 234-residue protein sequence, read N- to C-terminus: Demethylmenaquinone methyltransferase (234 aa).

S-adenosyl-L-methionine-binding positions include T58, D79, and 106-107; that span reads NA.

This sequence belongs to the class I-like SAM-binding methyltransferase superfamily. MenG/UbiE family.

It catalyses the reaction a 2-demethylmenaquinol + S-adenosyl-L-methionine = a menaquinol + S-adenosyl-L-homocysteine + H(+). Its pathway is quinol/quinone metabolism; menaquinone biosynthesis; menaquinol from 1,4-dihydroxy-2-naphthoate: step 2/2. In terms of biological role, methyltransferase required for the conversion of demethylmenaquinol (DMKH2) to menaquinol (MKH2). This Geobacillus stearothermophilus (Bacillus stearothermophilus) protein is Demethylmenaquinone methyltransferase.